The chain runs to 237 residues: Golgi anti-apoptotic protein (237 aa).

At 1–37 the chain is on the cytoplasmic side; sequence MAMPSLSACSSIEDDFNYGSSVASASVHIRMAFLRKV. Residues 38-58 form a helical membrane-spanning segment; it reads YGILCLQFLLTTATTAVFLYF. The Lumenal segment spans residues 59–67; it reads DCMRTFIQG. Residues 68 to 88 form a helical membrane-spanning segment; the sequence is SPVLILASMFGSIGLIFALTL. The Cytoplasmic segment spans residues 89 to 94; that stretch reads HRHKHP. Residues 95–115 form a helical membrane-spanning segment; it reads LNLYLLCGFTLSESLTLASVV. A topological domain (lumenal) is located at residue Thr-116. Residues 117–137 traverse the membrane as a helical segment; it reads FYDVHVVMQAFMLTTAAFLAL. The Cytoplasmic segment spans residues 138 to 151; it reads TTYTLQSKRDFSKL. The helical transmembrane segment at 152–172 threads the bilayer; sequence GAGLFAALWILILSGLLGIFV. The Lumenal portion of the chain corresponds to 173 to 174; sequence QN. Residues 175–195 form a helical membrane-spanning segment; sequence ETVKLVLSAFGALVFCGFIIY. Residues 196-209 lie on the Cytoplasmic side of the membrane; that stretch reads DTHSLIHKLSPEEY. Residues 210–230 constitute an intramembrane region (helical); the sequence is VLASINLYLDIINLFLHLLQL. Residues 231 to 237 lie on the Cytoplasmic side of the membrane; it reads LEVSNKK.

The protein belongs to the BI1 family. LFG subfamily.

Its subcellular location is the host Golgi apparatus membrane. Its function is as follows. May affect virulence through inhibition of apoptosis. The polypeptide is Golgi anti-apoptotic protein (L6) (Vaccinia virus (strain LC16m0) (VACV)).